The following is a 666-amino-acid chain: ATP synthase subunit alpha 2 (666 aa).

An ATP-binding site is contributed by 182 to 189 (GDRATGKT). Residues 527–666 (MPAEDAAGDI…DAEAEARHKR (140 aa)) are disordered. Positions 545–590 (ARGDADRDADHGANREVSREVSPEASREVSREVSCEVSHEADRDAA) are enriched in basic and acidic residues. Positions 591–601 (ADAARVAGRAP) are enriched in low complexity. Over residues 623–641 (ADGDRASASRPRPDARGDA) the composition is skewed to basic and acidic residues.

The protein belongs to the ATPase alpha/beta chains family. F-type ATPases have 2 components, CF(1) - the catalytic core - and CF(0) - the membrane proton channel. CF(1) has five subunits: alpha(3), beta(3), gamma(1), delta(1), epsilon(1). CF(0) has three main subunits: a(1), b(2) and c(9-12). The alpha and beta chains form an alternating ring which encloses part of the gamma chain. CF(1) is attached to CF(0) by a central stalk formed by the gamma and epsilon chains, while a peripheral stalk is formed by the delta and b chains.

The protein resides in the cell inner membrane. It catalyses the reaction ATP + H2O + 4 H(+)(in) = ADP + phosphate + 5 H(+)(out). Its function is as follows. Produces ATP from ADP in the presence of a proton gradient across the membrane. The alpha chain is a regulatory subunit. The polypeptide is ATP synthase subunit alpha 2 (Burkholderia pseudomallei (strain K96243)).